A 295-amino-acid polypeptide reads, in one-letter code: Phosphatidylserine decarboxylase proenzyme (295 aa).

Catalysis depends on charge relay system; for autoendoproteolytic cleavage activity residues D90, H147, and S254. The active-site Schiff-base intermediate with substrate; via pyruvic acid; for decarboxylase activity is the S254. S254 carries the post-translational modification Pyruvic acid (Ser); by autocatalysis.

Belongs to the phosphatidylserine decarboxylase family. PSD-B subfamily. Prokaryotic type I sub-subfamily. Heterodimer of a large membrane-associated beta subunit and a small pyruvoyl-containing alpha subunit. The cofactor is pyruvate. In terms of processing, is synthesized initially as an inactive proenzyme. Formation of the active enzyme involves a self-maturation process in which the active site pyruvoyl group is generated from an internal serine residue via an autocatalytic post-translational modification. Two non-identical subunits are generated from the proenzyme in this reaction, and the pyruvate is formed at the N-terminus of the alpha chain, which is derived from the carboxyl end of the proenzyme. The autoendoproteolytic cleavage occurs by a canonical serine protease mechanism, in which the side chain hydroxyl group of the serine supplies its oxygen atom to form the C-terminus of the beta chain, while the remainder of the serine residue undergoes an oxidative deamination to produce ammonia and the pyruvoyl prosthetic group on the alpha chain. During this reaction, the Ser that is part of the protease active site of the proenzyme becomes the pyruvoyl prosthetic group, which constitutes an essential element of the active site of the mature decarboxylase.

It is found in the cell membrane. It catalyses the reaction a 1,2-diacyl-sn-glycero-3-phospho-L-serine + H(+) = a 1,2-diacyl-sn-glycero-3-phosphoethanolamine + CO2. The protein operates within phospholipid metabolism; phosphatidylethanolamine biosynthesis; phosphatidylethanolamine from CDP-diacylglycerol: step 2/2. In terms of biological role, catalyzes the formation of phosphatidylethanolamine (PtdEtn) from phosphatidylserine (PtdSer). The chain is Phosphatidylserine decarboxylase proenzyme from Sodalis glossinidius (strain morsitans).